Here is a 466-residue protein sequence, read N- to C-terminus: MASTLFDKIWAAHVVDRMPDGTAVLYIDRHLVHEVTSPQAFEGLRMAGRKVRRVDATIAVADHNVPTEDRAAGIAEPESALQVATLEQNVAAFGVPYIPVTDARQGIVHVIGPEQGISLPGMTIVCGDSHTSTHGAMGALAFGIGTSEVEHVLATQTLLQKPAKNMLVRVDGTLPPGCSAKDIVLAIIGEIGTAGGTGHVIEYAGEAIRALDMAGRMTVCNMSIEAGARAGLIAPDETTFEYVRGRPYAPKGEALERAIDYWKTLASDEGAQYDRVVTIDASALVPQVTWGTSPETVVPITGHVPDPAAEPDAGRRAQMERMLQYMDLAPGQALKGTKIDAVFIGSCTNSRIEDLRVAAGIVRGKKVAGHVRAMVVPGSGLVKAQAEAEGLAQVFLDAGFEWREAGCSMCLGMNPDKLKPGERCASTSNRNFEGRQGPGGRTHLVSPAMAAASAITGALADPREMA.

Positions 347, 407, and 410 each coordinate [4Fe-4S] cluster.

The protein belongs to the aconitase/IPM isomerase family. LeuC type 1 subfamily. In terms of assembly, heterodimer of LeuC and LeuD. It depends on [4Fe-4S] cluster as a cofactor.

It carries out the reaction (2R,3S)-3-isopropylmalate = (2S)-2-isopropylmalate. It participates in amino-acid biosynthesis; L-leucine biosynthesis; L-leucine from 3-methyl-2-oxobutanoate: step 2/4. Its function is as follows. Catalyzes the isomerization between 2-isopropylmalate and 3-isopropylmalate, via the formation of 2-isopropylmaleate. The sequence is that of 3-isopropylmalate dehydratase large subunit from Acidiphilium cryptum (strain JF-5).